The primary structure comprises 160 residues: 6,7-dimethyl-8-ribityllumazine synthase (160 aa).

Residues tryptophan 28, 59-61 (SFE), and 82-84 (VII) each bind 5-amino-6-(D-ribitylamino)uracil. 87–88 (GT) provides a ligand contact to (2S)-2-hydroxy-3-oxobutyl phosphate. Residue histidine 90 is the Proton donor of the active site. A 5-amino-6-(D-ribitylamino)uracil-binding site is contributed by phenylalanine 115. Residue arginine 129 coordinates (2S)-2-hydroxy-3-oxobutyl phosphate.

The protein belongs to the DMRL synthase family.

The enzyme catalyses (2S)-2-hydroxy-3-oxobutyl phosphate + 5-amino-6-(D-ribitylamino)uracil = 6,7-dimethyl-8-(1-D-ribityl)lumazine + phosphate + 2 H2O + H(+). The protein operates within cofactor biosynthesis; riboflavin biosynthesis; riboflavin from 2-hydroxy-3-oxobutyl phosphate and 5-amino-6-(D-ribitylamino)uracil: step 1/2. Its function is as follows. Catalyzes the formation of 6,7-dimethyl-8-ribityllumazine by condensation of 5-amino-6-(D-ribitylamino)uracil with 3,4-dihydroxy-2-butanone 4-phosphate. This is the penultimate step in the biosynthesis of riboflavin. This chain is 6,7-dimethyl-8-ribityllumazine synthase, found in Clavibacter sepedonicus (Clavibacter michiganensis subsp. sepedonicus).